A 427-amino-acid polypeptide reads, in one-letter code: Serine protease HTRA2, mitochondrial (427 aa).

Residues 33–57 (HTASSSKGSGGDNSKDQENNGQNKS) are disordered. The chain crosses the membrane as a helical span at residues 67–87 (VFQFCVPFSLGALVSAVLIEG). Residues 78-81 (ALVS) carry the IAP-binding motif. Positions 144–307 (SNGSGFVIEQ…IPIDYVKVFL (164 aa)) are serine protease. Residues His-162, Asp-194, and Ser-271 each act as charge relay system in the active site. One can recognise a PDZ domain in the interval 330 to 415 (MGITMLTLTP…DLEIVILRGV (86 aa)).

Belongs to the peptidase S1C family. In terms of assembly, interacts with th/DIAP1 (via BIR 2 domain).

The protein resides in the mitochondrion intermembrane space. It localises to the mitochondrion membrane. The catalysed reaction is Cleavage of non-polar aliphatic amino-acids at the P1 position, with a preference for Val, Ile and Met. At the P2 and P3 positions, Arg is selected most strongly with a secondary preference for other hydrophilic residues.. In terms of biological role, serine protease that shows proteolytic activity against a non-specific substrate beta-casein. Promotes or induces cell death either by direct binding to and inhibition of BIRC proteins (also called inhibitor of apoptosis proteins, IAPs), leading to an increase in caspase activity, or by a BIRC inhibition-independent, caspase-independent and serine protease activity-dependent mechanism. Can antagonize antiapoptotic activity of th/Diap1 by directly inducing the degradation of th/Diap1. This Drosophila persimilis (Fruit fly) protein is Serine protease HTRA2, mitochondrial.